Here is a 196-residue protein sequence, read N- to C-terminus: Protein/nucleic acid deglycase 3 (196 aa).

Residue Cys106 is the Nucleophile of the active site. Cys106 is subject to Cysteine sulfinic acid (-SO2H); alternate.

Belongs to the peptidase C56 family. In terms of assembly, homodimer. Cys-106 is easily oxidized to sulfinic acid.

The enzyme catalyses N(omega)-(1-hydroxy-2-oxopropyl)-L-arginyl-[protein] + H2O = lactate + L-arginyl-[protein] + H(+). The catalysed reaction is N(6)-(1-hydroxy-2-oxopropyl)-L-lysyl-[protein] + H2O = lactate + L-lysyl-[protein] + H(+). It carries out the reaction S-(1-hydroxy-2-oxopropyl)-L-cysteinyl-[protein] + H2O = lactate + L-cysteinyl-[protein] + H(+). It catalyses the reaction N(omega)-(1-hydroxy-2-oxoethyl)-L-arginyl-[protein] + H2O = L-arginyl-[protein] + glycolate + H(+). The enzyme catalyses N(6)-(1-hydroxy-2-oxoethyl)-L-lysyl-[protein] + H2O = glycolate + L-lysyl-[protein] + H(+). The catalysed reaction is S-(1-hydroxy-2-oxoethyl)-L-cysteinyl-[protein] + H2O = glycolate + L-cysteinyl-[protein] + H(+). It carries out the reaction N(2)-(1-hydroxy-2-oxopropyl)-dGTP + H2O = lactate + dGTP + H(+). It catalyses the reaction N(2)-(1-hydroxy-2-oxopropyl)-GTP + H2O = lactate + GTP + H(+). The enzyme catalyses N(2)-(1-hydroxy-2-oxopropyl)-GDP + H2O = lactate + GDP + H(+). The catalysed reaction is N(2)-(1-hydroxy-2-oxopropyl)-GMP + H2O = lactate + GMP + H(+). It carries out the reaction N(2)-(1-hydroxy-2-oxoethyl)-dGTP + H2O = dGTP + glycolate + H(+). It catalyses the reaction N(2)-(1-hydroxy-2-oxoethyl)-GTP + H2O = glycolate + GTP + H(+). The enzyme catalyses N(2)-(1-hydroxy-2-oxoethyl)-GDP + H2O = glycolate + GDP + H(+). The catalysed reaction is N(2)-(1-hydroxy-2-oxoethyl)-GMP + H2O = glycolate + GMP + H(+). It carries out the reaction an N(2)-(1-hydroxy-2-oxopropyl)-guanosine in RNA + H2O = a guanosine in RNA + lactate + H(+). It catalyses the reaction an N(2)-(1-hydroxy-2-oxopropyl)-2'-deoxyguanosine in DNA + H2O = a 2'-deoxyguanosine in DNA + lactate + H(+). The enzyme catalyses an N(2)-(1-hydroxy-2-oxoethyl)-guanosine in RNA + H2O = a guanosine in RNA + glycolate + H(+). The catalysed reaction is an N(2)-(1-hydroxy-2-oxoethyl)-2'-deoxyguanosine in DNA + H2O = a 2'-deoxyguanosine in DNA + glycolate + H(+). Its activity is regulated as follows. Glyoxalase activity is inhibited by zinc ions. Active as a chaperone in both its reduced and oxidized states, and is more active in its oxidized form. Protein and nucleotide deglycase that catalyzes the deglycation of the Maillard adducts formed between amino groups of proteins or nucleotides and reactive carbonyl groups of glyoxals. Thus, functions as a protein deglycase that repairs methylglyoxal- and glyoxal-glycated proteins, and releases repaired proteins and lactate or glycolate, respectively. Deglycates cysteine, arginine and lysine residues in proteins, and thus reactivates these proteins by reversing glycation by glyoxals. Is able to repair glycated serum albumin, collagen, glyceraldehyde-3-phosphate dehydrogenase, and fructose biphosphate aldolase. Acts on early glycation intermediates (hemithioacetals and aminocarbinols), preventing the formation of Schiff bases and advanced glycation endproducts (AGE) that cause irreversible damage. Also functions as a nucleotide deglycase able to repair glycated guanine in the free nucleotide pool (GTP, GDP, GMP, dGTP) and in DNA and RNA. Is thus involved in a major nucleotide repair system named guanine glycation repair (GG repair), dedicated to reversing methylglyoxal and glyoxal damage via nucleotide sanitization and direct nucleic acid repair. However, is less efficient than Hsp31 and YhbO, suggesting that YajL might be preferentially dedicated to protein repair. Displays a covalent chaperone activity with sulfenylated thiol proteins by forming mixed disulfides with members of the thiol proteome, and preferentially with sulfenylated cellular proteins, upon oxidative stress; these mixed disulfides can be subsequently reduced by low-molecular-weight thiols to regenerate YajL and reduced proteins. Involved in biogenesis of ribosomal proteins, probably as a ribosomal protein-folding chaperone. Confers resistance to oxidative stress. Plays an important role in protection against electrophile/carbonyl stress. The chaperone activity reported for YajL is probably recruited to execute its deglycase activity, to interact with non-native glycated proteins and gain access to partially buried glycated sites. Also displays an apparent glyoxalase activity that in fact reflects its deglycase activity. The protein is Protein/nucleic acid deglycase 3 (yajL) of Escherichia coli (strain K12).